The sequence spans 348 residues: Alcohol dehydrogenase 1 (348 aa).

Residues Cys44, His67, Cys98, Cys101, Cys104, Cys112, and Cys154 each contribute to the Zn(2+) site. Residues 178 to 184 (GAGGGLG), Asp202, Lys207, 269 to 271 (VGL), and Arg341 each bind NAD(+).

This sequence belongs to the zinc-containing alcohol dehydrogenase family. As to quaternary structure, homotetramer. Requires Zn(2+) as cofactor.

The protein localises to the cytoplasm. The catalysed reaction is a primary alcohol + NAD(+) = an aldehyde + NADH + H(+). It catalyses the reaction a secondary alcohol + NAD(+) = a ketone + NADH + H(+). In terms of biological role, converts ethanol to acetaldehyde and plays a major role in xylose fermentation. This Scheffersomyces stipitis (strain ATCC 58785 / CBS 6054 / NBRC 10063 / NRRL Y-11545) (Yeast) protein is Alcohol dehydrogenase 1 (ADH1).